Here is a 117-residue protein sequence, read N- to C-terminus: Large ribosomal subunit protein bL20 (117 aa).

Belongs to the bacterial ribosomal protein bL20 family.

Its function is as follows. Binds directly to 23S ribosomal RNA and is necessary for the in vitro assembly process of the 50S ribosomal subunit. It is not involved in the protein synthesizing functions of that subunit. The sequence is that of Large ribosomal subunit protein bL20 from Vibrio cholerae serotype O1 (strain ATCC 39541 / Classical Ogawa 395 / O395).